We begin with the raw amino-acid sequence, 305 residues long: Undecaprenyl-diphosphatase (305 aa).

Helical transmembrane passes span Gly18 to Val38, Tyr55 to Trp75, Trp103 to Phe123, Pro130 to Leu150, Gly187 to Ile207, Phe225 to Leu245, Phe246 to Val266, and Leu284 to Leu304.

The protein belongs to the UppP family.

The protein localises to the cell membrane. The catalysed reaction is di-trans,octa-cis-undecaprenyl diphosphate + H2O = di-trans,octa-cis-undecaprenyl phosphate + phosphate + H(+). In terms of biological role, catalyzes the dephosphorylation of undecaprenyl diphosphate (UPP). Confers resistance to bacitracin. This Mycobacterium avium (strain 104) protein is Undecaprenyl-diphosphatase.